The sequence spans 690 residues: UvrABC system protein C (690 aa).

Residues 1 to 60 are disordered; it reads MTTDSSDPAKPAGPGQPPGSGADTRPGGLATGQDVDPATIETDEDDEARLPDVPDEPTDA. Over residues 41–58 the composition is skewed to acidic residues; the sequence is ETDEDDEARLPDVPDEPT. The 79-residue stretch at 82 to 160 folds into the GIY-YIG domain; sequence TSPGVYRMMN…IKQLRPRFNV (79 aa). The UVR domain maps to 270 to 305; that stretch reads RAVKEELAREMEKASGDLAFERAALYRDRLAALSAI.

This sequence belongs to the UvrC family. In terms of assembly, interacts with UvrB in an incision complex.

It localises to the cytoplasm. Functionally, the UvrABC repair system catalyzes the recognition and processing of DNA lesions. UvrC both incises the 5' and 3' sides of the lesion. The N-terminal half is responsible for the 3' incision and the C-terminal half is responsible for the 5' incision. The chain is UvrABC system protein C from Nitrobacter hamburgensis (strain DSM 10229 / NCIMB 13809 / X14).